Consider the following 237-residue polypeptide: Sensory rhodopsin-2 (237 aa).

Residues 1–2 (MA) lie on the Extracellular side of the membrane. A helical membrane pass occupies residues 3-23 (LTTWFWVGAVGMLAGTVLPIR). The Cytoplasmic portion of the chain corresponds to 24-31 (DCIRHPSH). A helical membrane pass occupies residues 32–53 (RRYDLVLAGITGLAAIAYTTMG). Over 54–67 (LGITATTVGDRTVY) the chain is Extracellular. A helical membrane pass occupies residues 68 to 89 (LARYIDWLVTTPLIVLYLAMLA). The Cytoplasmic segment spans residues 90 to 92 (RPG). A helical membrane pass occupies residues 93 to 115 (HRTSAWLLAADVFVIAAGIAAAL). Topologically, residues 116-119 (TTGV) are extracellular. The helical transmembrane segment at 120 to 147 (QRWLFFAVGAAGYAALLYGLLGTLPRAL) threads the bilayer. Topologically, residues 148–150 (GDD) are cytoplasmic. Residues 151–178 (PRVRSLFVTLRNITVVLWTLYPVVWLLS) traverse the membrane as a helical segment. Residues 179 to 186 (PAGIGILQ) are Extracellular-facing. The helical transmembrane segment at 187 to 214 (TEMYTIVVVYLDFISKVAFVAFAVLGAD) threads the bilayer. N6-(retinylidene)lysine is present on lysine 202. Residues 215–237 (AVSRLVAADAAAPATAEPTPDGD) are Cytoplasmic-facing.

The protein belongs to the archaeal/bacterial/fungal opsin family. In terms of assembly, interacts with HTR-II.

The protein localises to the cell membrane. Photophobic photoreceptor responsible for the negative phototaxis. Activates the sensory rhodopsin II transducer (HTR-II) in response to blue light. The sequence is that of Sensory rhodopsin-2 (sop2) from Halobacterium salinarum (strain ATCC 700922 / JCM 11081 / NRC-1) (Halobacterium halobium).